The sequence spans 338 residues: Lipoate-protein ligase A (338 aa).

One can recognise a BPL/LPL catalytic domain in the interval 29–216 (PATQRVLFLW…AFFAHYGERV (188 aa)). Residues Arg71, 76–79 (GAVF), and Lys134 each bind ATP. Lys134 is a (R)-lipoate binding site.

This sequence belongs to the LplA family. In terms of assembly, monomer.

Its subcellular location is the cytoplasm. The enzyme catalyses L-lysyl-[lipoyl-carrier protein] + (R)-lipoate + ATP = N(6)-[(R)-lipoyl]-L-lysyl-[lipoyl-carrier protein] + AMP + diphosphate + H(+). It participates in protein modification; protein lipoylation via exogenous pathway; protein N(6)-(lipoyl)lysine from lipoate: step 1/2. The protein operates within protein modification; protein lipoylation via exogenous pathway; protein N(6)-(lipoyl)lysine from lipoate: step 2/2. In terms of biological role, catalyzes both the ATP-dependent activation of exogenously supplied lipoate to lipoyl-AMP and the transfer of the activated lipoyl onto the lipoyl domains of lipoate-dependent enzymes. In Escherichia coli (strain K12 / MC4100 / BW2952), this protein is Lipoate-protein ligase A.